We begin with the raw amino-acid sequence, 130 residues long: Small ribosomal subunit protein uS11 (130 aa).

It belongs to the universal ribosomal protein uS11 family. Part of the 30S ribosomal subunit. Interacts with proteins S7 and S18. Binds to IF-3.

In terms of biological role, located on the platform of the 30S subunit, it bridges several disparate RNA helices of the 16S rRNA. Forms part of the Shine-Dalgarno cleft in the 70S ribosome. In Buchnera aphidicola subsp. Cinara cedri (strain Cc), this protein is Small ribosomal subunit protein uS11.